The following is a 136-amino-acid chain: Peptide methionine sulfoxide reductase MsrB (136 aa).

Residues 7–129 enclose the MsrB domain; it reads SSSHENTLTE…NSASLSFTDD (123 aa). Zn(2+)-binding residues include C46, C49, C95, and C98. C118 serves as the catalytic Nucleophile.

This sequence belongs to the MsrB Met sulfoxide reductase family. The cofactor is Zn(2+).

It carries out the reaction L-methionyl-[protein] + [thioredoxin]-disulfide + H2O = L-methionyl-(R)-S-oxide-[protein] + [thioredoxin]-dithiol. The sequence is that of Peptide methionine sulfoxide reductase MsrB from Erwinia tasmaniensis (strain DSM 17950 / CFBP 7177 / CIP 109463 / NCPPB 4357 / Et1/99).